Here is a 239-residue protein sequence, read N- to C-terminus: Phosphoribosylaminoimidazole-succinocarboxamide synthase (239 aa).

Belongs to the SAICAR synthetase family.

It carries out the reaction 5-amino-1-(5-phospho-D-ribosyl)imidazole-4-carboxylate + L-aspartate + ATP = (2S)-2-[5-amino-1-(5-phospho-beta-D-ribosyl)imidazole-4-carboxamido]succinate + ADP + phosphate + 2 H(+). It functions in the pathway purine metabolism; IMP biosynthesis via de novo pathway; 5-amino-1-(5-phospho-D-ribosyl)imidazole-4-carboxamide from 5-amino-1-(5-phospho-D-ribosyl)imidazole-4-carboxylate: step 1/2. The protein is Phosphoribosylaminoimidazole-succinocarboxamide synthase of Psychrobacter sp. (strain PRwf-1).